The sequence spans 418 residues: Gamma-glutamyl phosphate reductase (418 aa).

This sequence belongs to the gamma-glutamyl phosphate reductase family.

Its subcellular location is the cytoplasm. It catalyses the reaction L-glutamate 5-semialdehyde + phosphate + NADP(+) = L-glutamyl 5-phosphate + NADPH + H(+). The protein operates within amino-acid biosynthesis; L-proline biosynthesis; L-glutamate 5-semialdehyde from L-glutamate: step 2/2. Functionally, catalyzes the NADPH-dependent reduction of L-glutamate 5-phosphate into L-glutamate 5-semialdehyde and phosphate. The product spontaneously undergoes cyclization to form 1-pyrroline-5-carboxylate. The sequence is that of Gamma-glutamyl phosphate reductase from Dechloromonas aromatica (strain RCB).